A 171-amino-acid chain; its full sequence is Transcription antitermination protein NusB (171 aa).

Belongs to the NusB family.

Involved in transcription antitermination. Required for transcription of ribosomal RNA (rRNA) genes. Binds specifically to the boxA antiterminator sequence of the ribosomal RNA (rrn) operons. This is Transcription antitermination protein NusB from Pelodictyon phaeoclathratiforme (strain DSM 5477 / BU-1).